The primary structure comprises 330 residues: 4-hydroxythreonine-4-phosphate dehydrogenase (330 aa).

Residues His135 and Thr136 each coordinate substrate. Residues His165, His210, and His266 each coordinate a divalent metal cation. Substrate is bound by residues Lys274, Asn283, and Arg292.

Belongs to the PdxA family. In terms of assembly, homodimer. The cofactor is Zn(2+). Mg(2+) serves as cofactor. Requires Co(2+) as cofactor.

The protein localises to the cytoplasm. It catalyses the reaction 4-(phosphooxy)-L-threonine + NAD(+) = 3-amino-2-oxopropyl phosphate + CO2 + NADH. The protein operates within cofactor biosynthesis; pyridoxine 5'-phosphate biosynthesis; pyridoxine 5'-phosphate from D-erythrose 4-phosphate: step 4/5. In terms of biological role, catalyzes the NAD(P)-dependent oxidation of 4-(phosphooxy)-L-threonine (HTP) into 2-amino-3-oxo-4-(phosphooxy)butyric acid which spontaneously decarboxylates to form 3-amino-2-oxopropyl phosphate (AHAP). In Vibrio cholerae serotype O1 (strain ATCC 39315 / El Tor Inaba N16961), this protein is 4-hydroxythreonine-4-phosphate dehydrogenase.